Here is a 141-residue protein sequence, read N- to C-terminus: Large ribosomal subunit protein uL14m (141 aa).

Residues Met1 to Phe19 constitute a mitochondrion transit peptide.

This sequence belongs to the universal ribosomal protein uL14 family. Component of the mitochondrial ribosome large subunit (39S) which comprises a 16S rRNA and about 50 distinct proteins. Interacts with MALSU1.

Its subcellular location is the mitochondrion. May form part of 2 intersubunit bridges in the assembled ribosome. Upon binding to MALSU1, intersubunit bridge formation is blocked, preventing ribosome formation and repressing translation. The protein is Large ribosomal subunit protein uL14m (mrpl14) of Danio rerio (Zebrafish).